The sequence spans 446 residues: 6-methylsalicylate 1-monooxygenase atA (446 aa).

The chain crosses the membrane as a helical span at residues 7–27; sequence VSVAIIGGGIGGLSLAIGLLQ. Residues glutamate 37 and alanine 50 each contribute to the FAD site. N-linked (GlcNAc...) asparagine glycosylation is present at asparagine 107. Residue arginine 116 coordinates FAD. Arginine 200 is an active-site residue. Aspartate 311 and alanine 324 together coordinate FAD.

This sequence belongs to the paxM FAD-dependent monooxygenase family. FAD serves as cofactor.

It localises to the membrane. The catalysed reaction is 6-methylsalicylate + AH2 + O2 + H(+) = 3-methylcatechol + A + CO2 + H2O. It participates in secondary metabolite biosynthesis. Its function is as follows. 6-methylsalicylate 1-monooxygenase; part of the gene cluster that mediates the biosynthesis of terreic acid, a quinone epoxide inhibitor of Bruton's tyrosine kinase. The first step of the pathway is the synthesis of 6-methylsalicylic acid (6-MSA) by the 6-methylsalicylic acid synthase atX. In the biosynthesis of 6-MSA, atX utilizes one acetyl-CoA and three malonyl-CoAs as its substrates and catalyzes a series of programmed reactions including Claisen condensation, reduction, aldol cyclization, and the hydrolytic cleavage that yields 6-MSA. The 6-methylsalicylate 1-monooxygenase atA then catalyzes the decarboxylative hydroxylation of 6-MSA to 3-methylcatechol. The next step is the conversion of 3-methylcatechol to 3-methyl-1,2,4-benzenetriol by cytochrome P450 monooxygenase atE, which is enhanced by cytochrome P450 monooxygenase atG. Then, the epoxidase atD catalyzes the epoxidation and hydroxyl oxidation of 3-methyl-1,2,4-benzenetriol to terremutin. Lastly, GMC oxidoreductase atC oxidizes terremutin to terreic acid. This is 6-methylsalicylate 1-monooxygenase atA from Aspergillus terreus (strain NIH 2624 / FGSC A1156).